The primary structure comprises 373 residues: Chorismate synthase (373 aa).

Arg46 is an NADP(+) binding site. Residues 123 to 125 (RSS), 251 to 252 (NA), Gly295, 310 to 314 (KPTPS), and Arg337 each bind FMN.

It belongs to the chorismate synthase family. It depends on FMNH2 as a cofactor.

The catalysed reaction is 5-O-(1-carboxyvinyl)-3-phosphoshikimate = chorismate + phosphate. The protein operates within metabolic intermediate biosynthesis; chorismate biosynthesis; chorismate from D-erythrose 4-phosphate and phosphoenolpyruvate: step 7/7. Its function is as follows. Catalyzes the anti-1,4-elimination of the C-3 phosphate and the C-6 proR hydrogen from 5-enolpyruvylshikimate-3-phosphate (EPSP) to yield chorismate, which is the branch point compound that serves as the starting substrate for the three terminal pathways of aromatic amino acid biosynthesis. This reaction introduces a second double bond into the aromatic ring system. The protein is Chorismate synthase of Methanococcus maripaludis (strain C5 / ATCC BAA-1333).